Consider the following 1509-residue polypeptide: ABC transporter G family member 5 (1509 aa).

Basic and acidic residues predominate over residues 1–10 (MVKQDPRDKS). Residues 1 to 70 (MVKQDPRDKS…NNNNNNIKHK (70 aa)) form a disordered region. Residues 11-28 (SYSPNLSIPINNQEEPTL) are compositionally biased toward polar residues. The span at 29 to 66 (NNNNNNNNNNNNNNNNNNNNNNNNNNNNNNNKNNNNNN) shows a compositional bias: low complexity. Residues 129–376 (VYCRNATYTV…FKKLGFACPS (248 aa)) form the ABC transporter 1 domain. Residue 168–175 (GTPGCGKS) coordinates ATP. Residues 472–748 (SRNYYNFATR…SVCFFALKYL (277 aa)) enclose the ABC transmembrane type-2 1 domain. The next 7 membrane-spanning stretches (helical) occupy residues 477–497 (NFAT…TLYW), 512–532 (LLFF…NSFF), 557–577 (IICD…IVYW), 583–603 (PVFI…NLSL), 616–636 (IEIA…FSGF), 643–663 (IGGW…FQGL), and 725–745 (IVYA…FFAL). A compositionally biased stretch (low complexity) spans 813–831 (PLTSPNYNNNNNLSGSGNN). Residues 813–881 (PLTSPNYNNN…PISTSQKDIS (69 aa)) form a disordered region. A compositionally biased stretch (polar residues) spans 839–881 (TPSTLSPMVNSPLTNLSPMVNTPSKNGNHSKQKPISTSQKDIS). An ABC transporter 2 domain is found at 888–1141 (LQFKKLCYAV…VILDYCDKLG (254 aa)). Position 935-942 (935-942 (GPSGAGKS)) interacts with ATP. In terms of domain architecture, ABC transmembrane type-2 2 spans 1231–1504 (LRRPAIFVSN…GLSFWGFKKV (274 aa)). A run of 6 helical transmembrane segments spans residues 1236–1256 (IFVS…TLFV), 1271–1291 (LLFF…PTTV), 1320–1340 (YPFI…IAGL), 1352–1372 (CLFI…CLAV), 1379–1399 (MAST…GFVI), and 1481–1501 (IDIA…FWGF).

It belongs to the ABC transporter superfamily. ABCG family. PDR (TC 3.A.1.205) subfamily.

The protein localises to the membrane. In Dictyostelium discoideum (Social amoeba), this protein is ABC transporter G family member 5 (abcG5).